A 291-amino-acid chain; its full sequence is Basic helix-loop-helix protein 80 (291 aa).

A disordered region spans residues 65-120 (SAVLDTSPSVDRKRKAAEDSAHSKDSCKDGKSRRGKKASKEVEEKSTTEDEPPKGY). Basic and acidic residues predominate over residues 80-117 (AAEDSAHSKDSCKDGKSRRGKKASKEVEEKSTTEDEPP). A Nuclear localization signal motif is present at residues 125–132 (ARRGQATD). The tract at residues 129-142 (QATDSHSLAERVRR) is basic motif; degenerate. In terms of domain architecture, bHLH spans 129–179 (QATDSHSLAERVRRERISERMRMLQALVPGCDKVTGKALILDEIINYVQSL). Residues 143 to 179 (ERISERMRMLQALVPGCDKVTGKALILDEIINYVQSL) form a helix-loop-helix motif region.

The protein belongs to the bHLH protein family. As to quaternary structure, homodimer. Interacts with IBH1, BC1 and LO9-177.

It localises to the nucleus. Its function is as follows. Together with BCL2, positive regulator of cell elongation at least partially through increased gibberellic acid (GA) biosynthesis. The sequence is that of Basic helix-loop-helix protein 80 from Oryza sativa subsp. indica (Rice).